Consider the following 338-residue polypeptide: Methionine aminopeptidase 1D, mitochondrial (338 aa).

A mitochondrion-targeting transit peptide spans 1–47 (MAAPCAAQCLYRTGGLRLLQRISRLPHCHKDASLAHQCQFHRSFFWR). A substrate-binding site is contributed by histidine 164. Aspartate 181, aspartate 192, and histidine 255 together coordinate a divalent metal cation. Histidine 262 contributes to the substrate binding site. 2 residues coordinate a divalent metal cation: glutamate 287 and glutamate 318.

This sequence belongs to the peptidase M24A family. Methionine aminopeptidase type 1 subfamily. Co(2+) is required as a cofactor. It depends on Zn(2+) as a cofactor. Requires Mn(2+) as cofactor. The cofactor is Fe(2+).

It localises to the mitochondrion. It carries out the reaction Release of N-terminal amino acids, preferentially methionine, from peptides and arylamides.. Removes the N-terminal methionine from nascent proteins. The N-terminal methionine is often cleaved when the second residue in the primary sequence is small and uncharged (Met-Ala-, Cys, Gly, Pro, Ser, Thr, or Val). Requires deformylation of the N(alpha)-formylated initiator methionine before it can be hydrolyzed. The chain is Methionine aminopeptidase 1D, mitochondrial (metap1d) from Danio rerio (Zebrafish).